The primary structure comprises 300 residues: UDP-N-acetylenolpyruvoylglucosamine reductase (300 aa).

Residues 27–216 (RVGGPADVIF…TERREKTQPI (190 aa)) enclose the FAD-binding PCMH-type domain. The active site involves arginine 172. Serine 223 (proton donor) is an active-site residue. Glutamate 293 is an active-site residue.

It belongs to the MurB family. FAD serves as cofactor.

It is found in the cytoplasm. The catalysed reaction is UDP-N-acetyl-alpha-D-muramate + NADP(+) = UDP-N-acetyl-3-O-(1-carboxyvinyl)-alpha-D-glucosamine + NADPH + H(+). The protein operates within cell wall biogenesis; peptidoglycan biosynthesis. In terms of biological role, cell wall formation. This is UDP-N-acetylenolpyruvoylglucosamine reductase from Phenylobacterium zucineum (strain HLK1).